The chain runs to 304 residues: Mas-related G-protein coupled receptor member A1 (304 aa).

Topologically, residues 1-17 are extracellular; sequence MDNTIPGGINITILIPN. N10 carries N-linked (GlcNAc...) asparagine glycosylation. The chain crosses the membrane as a helical span at residues 18-38; that stretch reads LMIIIFGLVGLTGNGIVFWLL. At 39-53 the chain is on the cytoplasmic side; the sequence is GFCLHRNAFSVYILN. Residues 54 to 74 traverse the membrane as a helical segment; it reads LALADFFFLLGHIIDSILLLL. N75 is a topological domain (extracellular). The chain crosses the membrane as a helical span at residues 76-96; it reads VFYPITFLLCFYTIMMVLYIA. The Cytoplasmic portion of the chain corresponds to 97 to 131; that stretch reads GLSMLSAISTERCLSVLCPIWYHCHRPEHTSTVMC. The chain crosses the membrane as a helical span at residues 132-152; sequence AVIWVLSLLICILNSYFCGFL. Residues 153–166 are Extracellular-facing; sequence NTQYKNENGCLALN. Residues 167 to 187 traverse the membrane as a helical segment; sequence FFTAAYLMFLFVVLCLSSLAL. The Cytoplasmic portion of the chain corresponds to 188-206; that stretch reads VARLFCGTGQIKLTRLYVT. A helical membrane pass occupies residues 207 to 227; sequence IILSILVFLLCGLPFGIHWFL. Residues 228–243 are Extracellular-facing; that stretch reads LFKIKDDFHVFDLGFY. A helical membrane pass occupies residues 244–264; it reads LASVVLTAINSCANPIIYFFV. At 265 to 304 the chain is on the cytoplasmic side; the sequence is GSFRHRLKHQTLKMVLQNALQDTPETAKIMVEMSRSKSEP.

The protein belongs to the G-protein coupled receptor 1 family. Mas subfamily. Expressed in a subset of sensory neurons that includes nociceptors. Expressed in the subclass of non-peptidergic sensory neurons that are IB4(+) and VR1(-).

It is found in the cell membrane. Orphan receptor activated by a subset of RFamide-family neuropeptides such as FLRF-amide and FMRF-amide. Mediates its action by association with G proteins that activate a phosphatidylinositol-calcium second messenger system. Its effect is mediated by G(q) and G(11) proteins. May regulate the function of nociceptive neurons by modulation of pain perception. This Mus musculus (Mouse) protein is Mas-related G-protein coupled receptor member A1 (Mrgpra1).